The following is a 360-amino-acid chain: Josephin-like protein (360 aa).

In terms of domain architecture, Josephin spans 5 to 192 (ESKIYHERQR…NQLPLASNYR (188 aa)). C18 (nucleophile) is an active-site residue. Residue H129 is the Proton acceptor of the active site.

It catalyses the reaction Thiol-dependent hydrolysis of ester, thioester, amide, peptide and isopeptide bonds formed by the C-terminal Gly of ubiquitin (a 76-residue protein attached to proteins as an intracellular targeting signal).. Functionally, may act as a deubiquitinating enzyme. The sequence is that of Josephin-like protein from Arabidopsis thaliana (Mouse-ear cress).